The following is a 335-amino-acid chain: Serine protease 42 (335 aa).

A signal peptide spans 1–24 (MASGGGSLGLIVFLLLLQPKPCEA). Asn67 is a glycosylation site (N-linked (GlcNAc...) asparagine). Residues 79 to 315 (IMGGVDAEEG…YSKWLIAVVN (237 aa)) form the Peptidase S1 domain. A disulfide bridge links Cys104 with Cys120. Catalysis depends on His119, which acts as the Charge relay system. An N-linked (GlcNAc...) asparagine glycan is attached at Asn140. The Charge relay system role is filled by Asp165. Asn176 carries N-linked (GlcNAc...) asparagine glycosylation. 3 disulfides stabilise this stretch: Cys199/Cys273, Cys232/Cys253, and Cys263/Cys291. The active-site Charge relay system is the Ser267.

It belongs to the peptidase S1 family. Testis-specific. Mainly detected in round spermatids at all the eminiferous epithelial stages (at protein level).

The protein localises to the cytoplasm. It is found in the cell membrane. In terms of biological role, plays a role in spermatogenesis. Involved in germ cell survival during meiosis. Lacks protease activity in vitro. The polypeptide is Serine protease 42 (Mus musculus (Mouse)).